The primary structure comprises 296 residues: Aspartate carbamoyltransferase catalytic subunit (296 aa).

Residues Arg-50 and Thr-51 each coordinate carbamoyl phosphate. Lys-79 serves as a coordination point for L-aspartate. Positions 100, 128, and 131 each coordinate carbamoyl phosphate. Arg-161 and Arg-219 together coordinate L-aspartate. Residues Leu-258 and Pro-259 each coordinate carbamoyl phosphate.

It belongs to the aspartate/ornithine carbamoyltransferase superfamily. ATCase family. In terms of assembly, heterooligomer of catalytic and regulatory chains.

It catalyses the reaction carbamoyl phosphate + L-aspartate = N-carbamoyl-L-aspartate + phosphate + H(+). Its pathway is pyrimidine metabolism; UMP biosynthesis via de novo pathway; (S)-dihydroorotate from bicarbonate: step 2/3. In terms of biological role, catalyzes the condensation of carbamoyl phosphate and aspartate to form carbamoyl aspartate and inorganic phosphate, the committed step in the de novo pyrimidine nucleotide biosynthesis pathway. In Korarchaeum cryptofilum (strain OPF8), this protein is Aspartate carbamoyltransferase catalytic subunit.